The sequence spans 293 residues: Meteorin (293 aa).

An N-terminal signal peptide occupies residues 1–23; it reads MGFPAAALLCALCCGLLAPAARA. 5 disulfide bridges follow: cysteine 30–cysteine 51, cysteine 82–cysteine 118, cysteine 171–cysteine 242, cysteine 174–cysteine 266, and cysteine 184–cysteine 288.

It belongs to the meteorin family. In terms of assembly, monomer.

It is found in the secreted. In terms of biological role, involved in both glial cell differentiation and axonal network formation during neurogenesis. Promotes astrocyte differentiation and transforms cerebellar astrocytes into radial glia. Also induces axonal extension in small and intermediate neurons of sensory ganglia by activating nearby satellite glia. The polypeptide is Meteorin (METRN) (Homo sapiens (Human)).